The chain runs to 205 residues: MIGRLRGAVAEVGEEEALIDVMGVGYLVRCGHRTLQRLPALGEETLLHIESQWSESAGLRLYGFLTREDRRAFVLLQAIQGVGPKAAMAVLDVLSPAELASAVAREDKAAVGRANGVGPKLALRIVTELKDKPITDGPVLMSAPTSSAPSAPAKPAPTGDAVAALMGLGVAEVNARRVVEAAAAELGEEATVQALIKAGLKELGR.

Positions 1 to 65 (MIGRLRGAVA…SAGLRLYGFL (65 aa)) are domain I. Positions 66-144 (TREDRRAFVL…TDGPVLMSAP (79 aa)) are domain II. The tract at residues 145 to 153 (TSSAPSAPA) is flexible linker. Residues 153–205 (AKPAPTGDAVAALMGLGVAEVNARRVVEAAAAELGEEATVQALIKAGLKELGR) are domain III.

It belongs to the RuvA family. In terms of assembly, homotetramer. Forms an RuvA(8)-RuvB(12)-Holliday junction (HJ) complex. HJ DNA is sandwiched between 2 RuvA tetramers; dsDNA enters through RuvA and exits via RuvB. An RuvB hexamer assembles on each DNA strand where it exits the tetramer. Each RuvB hexamer is contacted by two RuvA subunits (via domain III) on 2 adjacent RuvB subunits; this complex drives branch migration. In the full resolvosome a probable DNA-RuvA(4)-RuvB(12)-RuvC(2) complex forms which resolves the HJ.

The protein resides in the cytoplasm. The RuvA-RuvB-RuvC complex processes Holliday junction (HJ) DNA during genetic recombination and DNA repair, while the RuvA-RuvB complex plays an important role in the rescue of blocked DNA replication forks via replication fork reversal (RFR). RuvA specifically binds to HJ cruciform DNA, conferring on it an open structure. The RuvB hexamer acts as an ATP-dependent pump, pulling dsDNA into and through the RuvAB complex. HJ branch migration allows RuvC to scan DNA until it finds its consensus sequence, where it cleaves and resolves the cruciform DNA. The protein is Holliday junction branch migration complex subunit RuvA of Caulobacter vibrioides (strain ATCC 19089 / CIP 103742 / CB 15) (Caulobacter crescentus).